The primary structure comprises 197 residues: MTSLYLASGSPRRQELLAQLGVTFERIVTGIEEQRQPQESAQQYVVRLAHKKAQAGVAQTAQDLPVLGADTIVILNGEVLEKPRDAEHAAQMLRKLSGQTHQVMTAVVLADSQHILDCLVVTDVTFRTLTDEDIAGYVASGEPLDKAGAYGIQGLGGCFVRKINGSYHAVVGLPLVETYELLSNFNALREKRDKHDG.

The active-site Proton acceptor is Asp-70.

It belongs to the Maf family. YhdE subfamily. A divalent metal cation serves as cofactor.

Its subcellular location is the cytoplasm. It carries out the reaction dTTP + H2O = dTMP + diphosphate + H(+). The enzyme catalyses UTP + H2O = UMP + diphosphate + H(+). Nucleoside triphosphate pyrophosphatase that hydrolyzes dTTP and UTP. May have a dual role in cell division arrest and in preventing the incorporation of modified nucleotides into cellular nucleic acids. This chain is dTTP/UTP pyrophosphatase (yceF2), found in Shigella boydii serotype 4 (strain Sb227).